Here is a 282-residue protein sequence, read N- to C-terminus: Cell division protein DivIB (282 aa).

At Met-1–Arg-59 the chain is on the cytoplasmic side. The interval Glu-19–Val-41 is disordered. Residues Gln-31–Val-41 show a composition bias toward basic residues. Residues Val-60–Pro-80 traverse the membrane as a helical segment. Residues Leu-81 to Lys-282 are Extracellular-facing. Residues Ser-82–Asn-153 enclose the POTRA domain.

The protein belongs to the FtsQ/DivIB family. DivIB subfamily.

It is found in the cell membrane. Its function is as follows. Cell division protein that may be involved in stabilizing or promoting the assembly of the division complex. The polypeptide is Cell division protein DivIB (Limosilactobacillus reuteri (strain ATCC 55730 / SD2112) (Lactobacillus reuteri)).